A 519-amino-acid chain; its full sequence is NADH-quinone oxidoreductase subunit C/D (519 aa).

An NADH dehydrogenase I subunit C region spans residues 1-138 (MSERIEIPAE…TNEEPVDTTQ (138 aa)). The interval 159–519 (DEYIINIGPQ…VDYVVPDIDR (361 aa)) is NADH dehydrogenase I subunit D.

It in the N-terminal section; belongs to the complex I 30 kDa subunit family. This sequence in the C-terminal section; belongs to the complex I 49 kDa subunit family. As to quaternary structure, NDH-1 is composed of 13 different subunits. Subunits NuoB, CD, E, F, and G constitute the peripheral sector of the complex.

It is found in the cell inner membrane. The catalysed reaction is a quinone + NADH + 5 H(+)(in) = a quinol + NAD(+) + 4 H(+)(out). Its function is as follows. NDH-1 shuttles electrons from NADH, via FMN and iron-sulfur (Fe-S) centers, to quinones in the respiratory chain. The immediate electron acceptor for the enzyme in this species is believed to be a menaquinone. Couples the redox reaction to proton translocation (for every two electrons transferred, four hydrogen ions are translocated across the cytoplasmic membrane), and thus conserves the redox energy in a proton gradient. In Phocaeicola vulgatus (strain ATCC 8482 / DSM 1447 / JCM 5826 / CCUG 4940 / NBRC 14291 / NCTC 11154) (Bacteroides vulgatus), this protein is NADH-quinone oxidoreductase subunit C/D.